Reading from the N-terminus, the 525-residue chain is Alpha-ketoglutaric semialdehyde dehydrogenase 2 (525 aa).

NAD(+) contacts are provided by residues Lys-185, Glu-188, and 242–247 (GSRQGG). The Proton acceptor role is filled by Glu-266. The Nucleophile role is filled by Cys-303. An NAD(+)-binding site is contributed by Glu-394.

This sequence belongs to the aldehyde dehydrogenase family. In terms of assembly, homodimer.

It carries out the reaction 2,5-dioxopentanoate + NADP(+) + H2O = 2-oxoglutarate + NADPH + 2 H(+). It catalyses the reaction 2,5-dioxopentanoate + NAD(+) + H2O = 2-oxoglutarate + NADH + 2 H(+). It functions in the pathway carbohydrate acid metabolism; D-glucarate degradation. The protein operates within carbohydrate acid metabolism; galactarate degradation. Functionally, catalyzes the NAD(P)(+)-dependent oxidation of alpha-ketoglutaric semialdehyde (alphaKGSA) to alpha-ketoglutarate. Involved in D-glucarate/D-galactarate metabolism. Prefers NAD(+) to NADP(+) as a cosubstrate. The protein is Alpha-ketoglutaric semialdehyde dehydrogenase 2 of Azospirillum brasilense.